A 412-amino-acid polypeptide reads, in one-letter code: Zinc finger protein 260 (412 aa).

C2H2-type zinc fingers lie at residues 27–49, 55–77, 83–105, 136–158, 164–186, 192–214, 220–242, 248–270, 276–298, 304–326, 332–354, 360–382, and 388–412; these read YECNECRKTFSLKQNLVEHKKMH, HECTECGKVCSRVSSLTLHLRSH, YKCNKCGKAFSQKENFLSHQKHH, YACKECGKAFNGKAYLTEHEKIH, FECNQCGRAFSQKQYLIKHQNIH, FKCSECGKAFSQKENLIIHQRIH, YECKGCGKAFIQKSSLIRHQRSH, YTCKECGKAFSGKSNLTEHEKIH, YKCNECGTIFRQKQYLIKHHNIH, YECNKCGKAFSRITSLIVHVRIH, YECKVCGKAFCQSSSLTVHMRSH, YGCNECGKAFSQFSTLALHMRIH, and YQCSECGKAFSQKSHHIRHQRIHTH.

This sequence belongs to the krueppel C2H2-type zinc-finger protein family. As to quaternary structure, binds DNA. Interacts with GATA4.

It is found in the nucleus. In terms of biological role, transcription factor that acts as a cardiac regulator and an effector of alpha1-adrenergic signaling. Binds to PE response elements (PERE) present in the promoter of genes such as ANF/NPPA and acts as a direct transcriptional activator of NPPA. Also acts as a cofactor with GATA4, a key cardiac regulator. The polypeptide is Zinc finger protein 260 (ZNF260) (Homo sapiens (Human)).